The primary structure comprises 358 residues: Serine/threonine-protein phosphatase 2A activator 2 (358 aa).

Belongs to the PTPA-type PPIase family.

It localises to the cytoplasm. It catalyses the reaction [protein]-peptidylproline (omega=180) = [protein]-peptidylproline (omega=0). Its function is as follows. PPIases accelerate the folding of proteins. It catalyzes the cis-trans isomerization of proline imidic peptide bonds in oligopeptides. Acts as a regulatory subunit for PP2A-like phosphatases modulating their activity or substrate specificity, probably by inducing a conformational change in the catalytic subunit, a direct target of the PPIase. Can reactivate inactive phosphatase PP2A-phosphatase methylesterase complexes (PP2Ai) in presence of ATP and Mg(2+) by dissociating the inactive form from the complex. The protein is Serine/threonine-protein phosphatase 2A activator 2 (RRD2) of Candida albicans (strain SC5314 / ATCC MYA-2876) (Yeast).